We begin with the raw amino-acid sequence, 1177 residues long: DNA-directed RNA polymerase subunit beta (1177 aa).

Over residues 1147 to 1161 (DDTEIEMRDTEDDDD) the composition is skewed to acidic residues. The disordered stretch occupies residues 1147–1177 (DDTEIEMRDTEDDDDHQSADKLNVEVETTKE). A compositionally biased stretch (basic and acidic residues) spans 1162–1177 (HQSADKLNVEVETTKE).

It belongs to the RNA polymerase beta chain family. As to quaternary structure, the RNAP catalytic core consists of 2 alpha, 1 beta, 1 beta' and 1 omega subunit. When a sigma factor is associated with the core the holoenzyme is formed, which can initiate transcription.

The enzyme catalyses RNA(n) + a ribonucleoside 5'-triphosphate = RNA(n+1) + diphosphate. Functionally, DNA-dependent RNA polymerase catalyzes the transcription of DNA into RNA using the four ribonucleoside triphosphates as substrates. In Bacillus anthracis (strain A0248), this protein is DNA-directed RNA polymerase subunit beta.